The chain runs to 307 residues: Ornithine carbamoyltransferase (307 aa).

Carbamoyl phosphate contacts are provided by residues 55-58, Gln-82, Arg-106, and 133-136; these read STRT and HPCQ. L-ornithine-binding positions include Asn-164, Asp-224, and 228–229; that span reads SM. Residues 263–264 and Arg-291 each bind carbamoyl phosphate; that span reads CL.

It belongs to the aspartate/ornithine carbamoyltransferase superfamily. OTCase family.

The protein localises to the cytoplasm. It carries out the reaction carbamoyl phosphate + L-ornithine = L-citrulline + phosphate + H(+). It participates in amino-acid biosynthesis; L-arginine biosynthesis; L-arginine from L-ornithine and carbamoyl phosphate: step 1/3. In terms of biological role, reversibly catalyzes the transfer of the carbamoyl group from carbamoyl phosphate (CP) to the N(epsilon) atom of ornithine (ORN) to produce L-citrulline. The chain is Ornithine carbamoyltransferase from Bradyrhizobium diazoefficiens (strain JCM 10833 / BCRC 13528 / IAM 13628 / NBRC 14792 / USDA 110).